The following is an 81-amino-acid chain: Saposin-C (81 aa).

In terms of domain architecture, Saposin B-type spans 1-81 (ESVTCKACEY…CSELGLCMSG (81 aa)). 3 disulfide bridges follow: Cys-5/Cys-78, Cys-8/Cys-72, and Cys-36/Cys-47. Asn-22 carries an N-linked (GlcNAc...) asparagine glycan.

Saposin-A and saposin-C stimulate the hydrolysis of glucosylceramide by beta-glucosylceramidase (EC 3.2.1.45) and galactosylceramide by beta-galactosylceramidase (EC 3.2.1.46). Saposin-C apparently acts by combining with the enzyme and acidic lipid to form an activated complex, rather than by solubilizing the substrate. This is Saposin-C (PSAP) from Cavia porcellus (Guinea pig).